A 670-amino-acid polypeptide reads, in one-letter code: DNA ligase (670 aa).

Residues 32 to 36 (DSEYD), 81 to 82 (SL), and Glu114 contribute to the NAD(+) site. Lys116 functions as the N6-AMP-lysine intermediate in the catalytic mechanism. NAD(+) contacts are provided by Arg137, Glu174, Lys291, and Lys315. Residues Cys409, Cys412, Cys427, and Cys433 each contribute to the Zn(2+) site. The BRCT domain occupies 592-670 (ASENLFKDKT…EEEFLAQITR (79 aa)).

Belongs to the NAD-dependent DNA ligase family. LigA subfamily. It depends on Mg(2+) as a cofactor. Mn(2+) is required as a cofactor.

The catalysed reaction is NAD(+) + (deoxyribonucleotide)n-3'-hydroxyl + 5'-phospho-(deoxyribonucleotide)m = (deoxyribonucleotide)n+m + AMP + beta-nicotinamide D-nucleotide.. DNA ligase that catalyzes the formation of phosphodiester linkages between 5'-phosphoryl and 3'-hydroxyl groups in double-stranded DNA using NAD as a coenzyme and as the energy source for the reaction. It is essential for DNA replication and repair of damaged DNA. This chain is DNA ligase, found in Haemophilus influenzae (strain 86-028NP).